Consider the following 339-residue polypeptide: Leucine-rich repeat-containing protein 59 (339 aa).

The Cytoplasmic portion of the chain corresponds to 1–282 (MARGGGKSGS…KHSWSRSVLR (282 aa)). 4 LRR repeats span residues 10–31 (SLKD…SEVP), 40–61 (KATV…FCSL), 63–84 (HLVK…FGRL), and 86–107 (SLQH…FAQL). A coiled-coil region spans residues 181–254 (MKVIQSEQDR…EMEKKTKKET (74 aa)). The interval 186 to 275 (SEQDRERQRK…PPQPARHKHS (90 aa)) is disordered. Over residues 187-256 (EQDRERQRKL…EKKTKKETVQ (70 aa)) the composition is skewed to basic and acidic residues. Residues 283 to 300 (ALLLVLLCILCTLAVCKL) traverse the membrane as a helical segment. Topologically, residues 301–339 (TELQHQPLCVSVNTLYEDVVAAVQNHKTLQNMLQQNSQQ) are lumenal.

As to quaternary structure, interacts with SGO1.

The protein resides in the microsome membrane. Its subcellular location is the endoplasmic reticulum membrane. It is found in the nucleus envelope. Functionally, required for nuclear import of FGF1. The chain is Leucine-rich repeat-containing protein 59 (LRRC59) from Gallus gallus (Chicken).